A 530-amino-acid polypeptide reads, in one-letter code: Ubiquitin carboxyl-terminal hydrolase 17-like protein 22 (530 aa).

The USP domain occupies 80–375; sequence AGLQNMGNTC…QAYVLFYIQK (296 aa). The active-site Nucleophile is Cys-89. Catalysis depends on His-334, which acts as the Proton acceptor. Basic and acidic residues-rich tracts occupy residues 382–392 and 398–412; these read SESVSRGREPR and DTDR…KRDH. Disordered regions lie at residues 382–412 and 476–530; these read SESV…KRDH and KNHH…LVCQ. Residues 484-495 show a composition bias toward low complexity; that stretch reads SSLLKLSSTTPT. The segment covering 496–505 has biased composition (polar residues); that stretch reads HQESMNTGTL. The segment covering 510–524 has biased composition (basic residues); the sequence is GRARRSKGKNKHSKR.

The protein belongs to the peptidase C19 family. USP17 subfamily.

It is found in the nucleus. Its subcellular location is the endoplasmic reticulum. It carries out the reaction Thiol-dependent hydrolysis of ester, thioester, amide, peptide and isopeptide bonds formed by the C-terminal Gly of ubiquitin (a 76-residue protein attached to proteins as an intracellular targeting signal).. Its function is as follows. Deubiquitinating enzyme that removes conjugated ubiquitin from specific proteins to regulate different cellular processes that may include cell proliferation, progression through the cell cycle, apoptosis, cell migration, and the cellular response to viral infection. This chain is Ubiquitin carboxyl-terminal hydrolase 17-like protein 22 (USP17L22), found in Homo sapiens (Human).